The primary structure comprises 78 residues: DNA-directed RNA polymerase subunit omega (78 aa).

This sequence belongs to the RNA polymerase subunit omega family. In terms of assembly, in cyanobacteria the RNAP catalytic core is composed of 2 alpha, 1 beta, 1 beta', 1 gamma and 1 omega subunit. When a sigma factor is associated with the core the holoenzyme is formed, which can initiate transcription.

The catalysed reaction is RNA(n) + a ribonucleoside 5'-triphosphate = RNA(n+1) + diphosphate. In terms of biological role, promotes RNA polymerase assembly. Latches the N- and C-terminal regions of the beta' subunit thereby facilitating its interaction with the beta and alpha subunits. This Trichormus variabilis (strain ATCC 29413 / PCC 7937) (Anabaena variabilis) protein is DNA-directed RNA polymerase subunit omega.